A 192-amino-acid polypeptide reads, in one-letter code: UPF0312 protein Ent638_1570 (192 aa).

A signal peptide spans 1–22; that stretch reads MKKRLLGIALGSLLFTTGSAVA.

It belongs to the UPF0312 family. Type 1 subfamily.

The protein resides in the periplasm. The polypeptide is UPF0312 protein Ent638_1570 (Enterobacter sp. (strain 638)).